Reading from the N-terminus, the 794-residue chain is Ribonucleoside-diphosphate reductase large subunit (794 aa).

Residues 1–92 (MHVIKRDGGQ…VSNLHKETKK (92 aa)) form the ATP-cone domain. Residues 5 to 6 (KR), 11 to 17 (EGVMFDK), Thr-53, and Asp-57 contribute to the ATP site. GDP contacts are provided by Ser-202 and Ser-217. Residues Cys-218 and Cys-444 are joined by a disulfide bond. DTTP-binding positions include 226 to 228 (DSI), Lys-243, Arg-256, and 263 to 264 (AG). Asn-427 is a GDP binding site. The active-site Proton acceptor is the Asn-427. Cys-429 functions as the Cysteine radical intermediate in the catalytic mechanism. GDP-binding positions include Glu-431 and 604-607 (TAST). Glu-431 (proton acceptor) is an active-site residue.

The protein belongs to the ribonucleoside diphosphate reductase large chain family. In terms of assembly, heterodimer of a large and a small subunit.

It is found in the cytoplasm. The catalysed reaction is a 2'-deoxyribonucleoside 5'-diphosphate + [thioredoxin]-disulfide + H2O = a ribonucleoside 5'-diphosphate + [thioredoxin]-dithiol. With respect to regulation, under complex allosteric control mediated by deoxynucleoside triphosphates and ATP binding to separate specificity and activation sites on the M1 subunit. The type of nucleotide bound at the specificity site determines substrate preference. It seems probable that ATP makes the enzyme reduce CDP and UDP, dGTP favors ADP reduction and dTTP favors GDP reduction. Stimulated by ATP and inhibited by dATP binding to the activity site. Provides the precursors necessary for DNA synthesis. Catalyzes the biosynthesis of deoxyribonucleotides from the corresponding ribonucleotides. This Danio rerio (Zebrafish) protein is Ribonucleoside-diphosphate reductase large subunit (rrm1).